The chain runs to 150 residues: Transcriptional regulator MraZ (150 aa).

2 consecutive SpoVT-AbrB domains span residues 7–55 (SHAI…PEPE) and 84–127 (AALM…SEES).

This sequence belongs to the MraZ family. Forms oligomers.

It is found in the cytoplasm. Its subcellular location is the nucleoid. The chain is Transcriptional regulator MraZ from Marinobacter nauticus (strain ATCC 700491 / DSM 11845 / VT8) (Marinobacter aquaeolei).